The primary structure comprises 148 residues: Holo-[acyl-carrier-protein] synthase (148 aa).

Residues aspartate 8 and glutamate 57 each contribute to the Mg(2+) site.

It belongs to the P-Pant transferase superfamily. AcpS family. Mg(2+) serves as cofactor.

The protein localises to the cytoplasm. It catalyses the reaction apo-[ACP] + CoA = holo-[ACP] + adenosine 3',5'-bisphosphate + H(+). Its function is as follows. Transfers the 4'-phosphopantetheine moiety from coenzyme A to a Ser of acyl-carrier-protein. This is Holo-[acyl-carrier-protein] synthase from Ruegeria pomeroyi (strain ATCC 700808 / DSM 15171 / DSS-3) (Silicibacter pomeroyi).